A 147-amino-acid chain; its full sequence is MASHRLLLLCLAGLVFVSEAGPTGTGESKCPLMVKVLDAVRGSPAINVAVHVFKKAADETWEPFASGKTSESGELHGLTTEEEFVEGIYKVEIDTKSYWKALGISPFHEHAEVVFTANDSGPRRYTIAALLSPYSYSTTAVVTIPKE.

Positions 1–20 are cleaved as a signal peptide; sequence MASHRLLLLCLAGLVFVSEA. Position 30 is a sulfocysteine (cysteine 30). An L-thyroxine-binding site is contributed by lysine 35. Glutamate 62 is modified (4-carboxyglutamate). Serine 72 is modified (phosphoserine). Glutamate 74 is a binding site for L-thyroxine. Asparagine 118 carries N-linked (GlcNAc...) asparagine glycosylation. Serine 137 contacts L-thyroxine.

It belongs to the transthyretin family. Homotetramer. Dimer of dimers. In the homotetramer, subunits assemble around a central channel that can accommodate two ligand molecules. Interacts with RBP4. In terms of processing, sulfonation of the reactive cysteine Cys-30 enhances the stability of the native conformation of TTR, avoiding misassembly of the protein leading to amyloid formation. Detected in brain.

Its subcellular location is the secreted. Thyroid hormone-binding protein. Probably transports thyroxine from the bloodstream to the brain. The polypeptide is Transthyretin (TTR) (Pan troglodytes (Chimpanzee)).